A 422-amino-acid polypeptide reads, in one-letter code: Serine hydroxymethyltransferase (422 aa).

121 to 123 (GHI) is a (6S)-5,6,7,8-tetrahydrofolate binding site. N6-(pyridoxal phosphate)lysine is present on K227. E245 contacts (6S)-5,6,7,8-tetrahydrofolate.

Belongs to the SHMT family. As to quaternary structure, homodimer. The cofactor is pyridoxal 5'-phosphate.

Its subcellular location is the cytoplasm. The enzyme catalyses 5,10-methylenetetrahydromethanopterin + glycine + H2O = 5,6,7,8-tetrahydromethanopterin + L-serine. The protein operates within amino-acid biosynthesis; glycine biosynthesis; glycine from L-serine: step 1/1. In terms of biological role, catalyzes the reversible interconversion of serine and glycine with tetrahydromethanopterin (H4MPT) serving as the one-carbon carrier. Also exhibits a pteridine-independent aldolase activity toward beta-hydroxyamino acids, producing glycine and aldehydes, via a retro-aldol mechanism. This is Serine hydroxymethyltransferase from Methanobrevibacter smithii (strain ATCC 35061 / DSM 861 / OCM 144 / PS).